We begin with the raw amino-acid sequence, 493 residues long: MKAKSLMVVGTTSHAGKSLLAAVICRWLAQQGYRVTPFKGQNMALNAYVTREGGEIGYAQAMQAWAAGIEPEVAMNPILLKPQGNMTSQVILRGQVVGVTRAADYYRDYFERGWQAITEALADLQQRFDWIVCEGAGSPAEINLKHRDLTNMRVATYLGAPTILVADIDRGGVFAHIVGTLMLLEPAERALIQGIVINKFRGQRSLLDSGLQWLEETTGVPVLGVIPWLERHYAAEDSLDLWDPRPQRQGADLKITVIRLPRIANFTDIDPLLAEPSVAVEFLPPHRPLGRPDAVILPGTKTTIADLQVLRETGMAEQLKTYAAQGGTILGICGGWQMLGTAISDPLGLEGCPGTYEGLGLMPLHTQLGPTKCTQQQQTQSLYFNCPEPILGYEIHQGQSEYTGDRQGWHPLFAAPELGLVNRAGTLWGTYLHGLLENGPWRRHWLNGLRSRRQLPPLPTAIPHYGEQRTVALDELTKTVMAHLNLRGICKLC.

In terms of domain architecture, GATase cobBQ-type spans 252 to 441; it reads DLKITVIRLP…LHGLLENGPW (190 aa). Cys-333 (nucleophile) is an active-site residue. His-433 is an active-site residue.

Belongs to the CobB/CobQ family. CobQ subfamily.

It participates in cofactor biosynthesis; adenosylcobalamin biosynthesis. In terms of biological role, catalyzes amidations at positions B, D, E, and G on adenosylcobyrinic A,C-diamide. NH(2) groups are provided by glutamine, and one molecule of ATP is hydrogenolyzed for each amidation. In Thermosynechococcus vestitus (strain NIES-2133 / IAM M-273 / BP-1), this protein is Cobyric acid synthase.